The primary structure comprises 577 residues: Arginine--tRNA ligase (577 aa).

The short motif at 122–132 (PNVAKEMHVGH) is the 'HIGH' region element.

Belongs to the class-I aminoacyl-tRNA synthetase family. Monomer.

The protein resides in the cytoplasm. The catalysed reaction is tRNA(Arg) + L-arginine + ATP = L-arginyl-tRNA(Arg) + AMP + diphosphate. The protein is Arginine--tRNA ligase of Shigella flexneri serotype 5b (strain 8401).